The following is a 218-amino-acid chain: uncharacterized protein (218 aa).

The first 21 residues, 1–21, serve as a signal peptide directing secretion; sequence MKKFVYKYSFGALLLLSGLSS. Residue Cys-22 is the site of N-palmitoyl cysteine attachment. A lipid anchor (S-diacylglycerol cysteine) is attached at Cys-22.

This sequence belongs to the chlamydial CPn_0875/CT_734/TC_0107 family.

Its subcellular location is the cell membrane. This is an uncharacterized protein from Chlamydia muridarum (strain MoPn / Nigg).